The following is a 375-amino-acid chain: Serine protease 23 (375 aa).

The N-terminal stretch at 1–23 is a signal peptide; the sequence is MAGTPGHPIFLLLLLRAIGQVSP. Asparagine 93 is a glycosylation site (N-linked (GlcNAc...) asparagine). Residues cysteine 153 and cysteine 169 are joined by a disulfide bond. Residue histidine 168 is the Charge relay system of the active site. A glycan (N-linked (GlcNAc...) asparagine) is linked at asparagine 199. Residues aspartate 232 and serine 308 each act as charge relay system in the active site.

This sequence belongs to the peptidase S1 family.

The protein resides in the secreted. This chain is Serine protease 23 (PRSS23), found in Bos taurus (Bovine).